Here is a 380-residue protein sequence, read N- to C-terminus: MLRRKPSNASEKEPTQKKKLSLQRSSSFKDFAKSKPSSPVVSEKEFNLDDNIPEDESSVPTPEDAEKSGKKLGKKWRAVISRTMNRKTGKKMVKALSEEMGDTLEEGSASPTSPDCSLDSPGPEKMALAFSEQEERELPALSRQASTGSELCSPSPGSGNLGEESTAPQYTGPFCGRARVHTDFTPSPYDRDSLKLQKGDVIQIVEKPPVGTWLGLLNGRMGSFKFIYVDVLPEEAVGPARPSRRQSKGKRPKPKTLHELLERIGLEEHTSTLLLNGYQTLEDFKELRETHLNELNIMDPQHRAKLLTAAELLLDYDTGSEEAEEGTESGQEPAVSTVADPKVDIPRDSGCFEGSESGRDEAELAGTEEQLHGLSLSGAP.

The tract at residues 1 to 174 is disordered; the sequence is MLRRKPSNAS…STAPQYTGPF (174 aa). The segment covering 22-41 has biased composition (low complexity); the sequence is LQRSSSFKDFAKSKPSSPVV. Phosphoserine is present on residues S27, S34, and S42. T61 is modified (phosphothreonine). Positions 84–93 are enriched in basic residues; that stretch reads MNRKTGKKMV. Residue S97 is modified to Phosphoserine. A Phosphothreonine modification is found at T103. The residue at position 110 (S110) is a Phosphoserine. T112 is subject to Phosphothreonine. Phosphoserine is present on residues S113 and S120. Residues 143-158 are compositionally biased toward polar residues; that stretch reads RQASTGSELCSPSPGS. The 62-residue stretch at 173-234 folds into the SH3 domain; the sequence is PFCGRARVHT…KFIYVDVLPE (62 aa). The 65-residue stretch at 252–316 folds into the SAM domain; sequence PKPKTLHELL…LTAAELLLDY (65 aa). Residue T318 is modified to Phosphothreonine. The span at 318 to 327 shows a compositional bias: acidic residues; that stretch reads TGSEEAEEGT. The disordered stretch occupies residues 318–380; it reads TGSEEAEEGT…LHGLSLSGAP (63 aa). Phosphoserine is present on S320.

It belongs to the SASH family.

May function as a signaling adapter protein in lymphocytes. The protein is SAM and SH3 domain-containing protein 3 of Bos taurus (Bovine).